An 860-amino-acid polypeptide reads, in one-letter code: MAGLTAVVPQPGVLLILLLNLLHPAQPGGVPGAVPGGLPGGVPGGVYYPGAGIGGLGGGGGALGPGGKPPKPGAGLLGTFGAGPGGLGGAGPGAGLGAFPAGTFPGAGALVPGGAAGAAAAYKAAAKAGAGLGGVGGVPGGVGVGGVPGGVGVGGVPGGVGVGGVPGGVGGIGGIGGLGVSTGAVVPQVGAGIGAGGKPGKVPGVGLPGVYPGGVLPGTGARFPGVGVLPGVPTGTGVKAKAPGGGGAFAGIPGVGPFGGQQPGVPLGYPIKAPKLPGGYGLPYTNGKLPYGVAGAGGKAGYPTGTGVGSQAAAAAAKAAKYGAGGAGVLPGVGGGGIPGGAGAIPGIGGIAGAGTPAAAAAAKAAAKAAKYGAAGGLVPGGPGVRLPGAGIPGVGGIPGVGGIPGVGGPGIGGPGIVGGPGAVSPAAAAKAAAKAAKYGARGGVGIPTYGVGAGGFPGYGVGAGAGLGGASPAAAAAAAKAAKYGAGGAGALGGLVPGAVPGALPGAVPAVPGAGGVPGAGTPAAAAAAAAAKAAAKAGLGPGVGGVPGGVGVGGIPGGVGVGGVPGGVGPGGVTGIGAGPGGLGGAGSPAAAKSAAKAAAKAQYRAAAGLGAGVPGFGAGAGVPGFGAGAGVPGFGAGAGVPGFGAGAGVPGFGAGAVPGSLAASKAAKYGAAGGLGGPGGLGGPGGLGGPGGLGGAGVPGRVAGAAPPAAAAAAAKAAAKAAQYGLGGAGGLGAGGLGAGGLGAGGLGAGGLGAGGLGAGGLGAGGLGAGGGVSPAAAAKAAKYGAAGLGGVLGARPFPGGGVAARPGFGLSPIYPGGGAGGLGVGGKPPKPYGGALGALGYQGGGCFGKSCGRKRK.

An N-terminal signal peptide occupies residues 1-27 (MAGLTAVVPQPGVLLILLLNLLHPAQP). Pro35 and Pro72 each carry 4-hydroxyproline. At Pro84 the chain carries Hydroxyproline. Pro105 bears the 4-hydroxyproline mark. Residues Lys123 and Lys127 each carry the allysine modification. 4-hydroxyproline is present on residues Pro217, Pro230, Pro233, and Pro253. Lys299, Lys318, and Lys321 each carry allysine. Pro346 bears the 4-hydroxyproline mark. An allysine mark is found at Lys368 and Lys371. A Hydroxyproline modification is found at Pro383. 2 positions are modified to 4-hydroxyproline: Pro399 and Pro405. Hydroxyproline occurs at positions 410 and 415. 5 positions are modified to allysine: Lys431, Lys435, Lys438, Lys481, and Lys484. 2 positions are modified to 4-hydroxyproline: Pro498 and Pro519. Allysine is present on residues Lys534, Lys595, Lys599, and Lys603. A 4-hydroxyproline mark is found at Pro617, Pro626, Pro644, Pro653, and Pro661. Allysine is present on residues Lys668 and Lys671. Residue Pro702 is modified to 4-hydroxyproline. Lys719, Lys723, Lys783, and Lys786 each carry allysine. Pro832 carries the 4-hydroxyproline modification. Cysteines 850 and 855 form a disulfide.

Belongs to the elastin family. In terms of assembly, the polymeric elastin chains are cross-linked together into an extensible 3D network. Forms a ternary complex with BGN and MFAP2. Interacts with MFAP2 via divalent cations (calcium &gt; magnesium &gt; manganese) in a dose-dependent and saturating manner. Interacts with FBLN5 and FBN1. Forms a ternary complex with FBN1 and FBLN2 or FBLN5. Interacts with MFAP4 in a Ca (2+)-dependent manner; this interaction promotes ELN self-assembly. Interacts with EFEMP2 with moderate affinity. In terms of processing, elastin is formed through the cross-linking of its soluble precursor tropoelastin. Cross-linking is initiated through the action of lysyl oxidase on exposed lysines to form allysine. Subsequent spontaneous condensation reactions with other allysine or unmodified lysine residues result in various bi-, tri-, and tetrafunctional cross-links. The most abundant cross-links in mature elastin fibers are lysinonorleucine, allysine aldol, desmosine, and isodesmosine. Hydroxylation on proline residues within the sequence motif, GXPG, is most likely to be 4-hydroxy as this fits the requirement for 4-hydroxylation in vertebrates.

The protein localises to the secreted. It localises to the extracellular space. Its subcellular location is the extracellular matrix. Major structural protein of tissues such as aorta and nuchal ligament, which must expand rapidly and recover completely. Molecular determinant of the late arterial morphogenesis, stabilizing arterial structure by regulating proliferation and organization of vascular smooth muscle. This is Elastin (Eln) from Mus musculus (Mouse).